The primary structure comprises 472 residues: Eukaryotic translation initiation factor 2 subunit 3 (472 aa).

N-acetylalanine; partial is present on Ala-2. Ser-16 carries the post-translational modification Phosphoserine. The 210-residue stretch at 39-248 folds into the tr-type G domain; it reads QATINIGTIG…IVKKIPVPPR (210 aa). A G1 region spans residues 48–55; that stretch reads GHVAHGKS. 51–56 is a GTP binding site; sequence AHGKST. The tract at residues 76-80 is G2; that stretch reads NITIK. The segment at 134-137 is G3; sequence DCPG. Residues 190–193 and 225–227 each bind GTP; these read NKID and SAQ. The segment at 190-193 is G4; the sequence is NKID. Positions 225–227 are G5; sequence SAQ. The interval 457 to 469 is interacts with CDC123; it reads GQIRRGVTIKPTV.

This sequence belongs to the TRAFAC class translation factor GTPase superfamily. Classic translation factor GTPase family. EIF2G subfamily. Eukaryotic translation initiation factor 2 eIF2 is a heterotrimeric complex composed of an alpha (EIF2S1), a beta (EIF2S2) and a gamma (EIF2S3) chain. eIF2 is member of the 43S pre-initiation complex (43S PIC). Interacts (via C-terminus) with CDC123; the interaction is direct. As to expression, expressed in testis, brain, liver and muscle.

Its subcellular location is the cytoplasm. It is found in the cytosol. The enzyme catalyses GTP + H2O = GDP + phosphate + H(+). In terms of biological role, member of the eIF2 complex that functions in the early steps of protein synthesis by forming a ternary complex with GTP and initiator tRNA. This complex binds to a 40S ribosomal subunit, followed by mRNA binding to form the 43S pre-initiation complex (43S PIC). Junction of the 60S ribosomal subunit to form the 80S initiation complex is preceded by hydrolysis of the GTP bound to eIF2 and release of an eIF2-GDP binary complex. In order for eIF2 to recycle and catalyze another round of initiation, the GDP bound to eIF2 must exchange with GTP by way of a reaction catalyzed by eIF-2B. In Homo sapiens (Human), this protein is Eukaryotic translation initiation factor 2 subunit 3 (EIF2S3).